Reading from the N-terminus, the 306-residue chain is Ornithine carbamoyltransferase (306 aa).

Residues 46–49 (STRT), Gln-73, Arg-97, and 124–127 (HPTQ) each bind carbamoyl phosphate. L-ornithine is bound by residues Asn-156, Asp-220, and 224–225 (SM). Residues 260–261 (CL) and Arg-288 each bind carbamoyl phosphate.

The protein belongs to the aspartate/ornithine carbamoyltransferase superfamily. OTCase family.

Its subcellular location is the cytoplasm. The catalysed reaction is carbamoyl phosphate + L-ornithine = L-citrulline + phosphate + H(+). Its pathway is amino-acid degradation; L-arginine degradation via ADI pathway; carbamoyl phosphate from L-arginine: step 2/2. Its function is as follows. Reversibly catalyzes the transfer of the carbamoyl group from carbamoyl phosphate (CP) to the N(epsilon) atom of ornithine (ORN) to produce L-citrulline. The sequence is that of Ornithine carbamoyltransferase from Campylobacter jejuni subsp. doylei (strain ATCC BAA-1458 / RM4099 / 269.97).